Here is a 784-residue protein sequence, read N- to C-terminus: DNA repair and recombination protein RAD54-like (784 aa).

The disordered stretch occupies residues 1–54 (MRRSLAPSQRGPMRPESRHSFTPPLLKKNKRSCQQELEREQELDRKRQSALRDA). Residues 2–9 (RRSLAPSQ) are required for chromatin remodeling, strand pairing activities and coupling of ATPase activity. Position 20 is a phosphoserine (serine 20). Threonine 22 carries the post-translational modification Phosphothreonine. The segment covering 36–47 (ELEREQELDRKR) has biased composition (basic and acidic residues). A Helicase ATP-binding domain is found at 172-346 (EGKRGNFNGC…YSLVNFVNPE (175 aa)). Residue 185–192 (DEMGLGKT) participates in ATP binding. A DEGH box motif is present at residues 297–300 (DEGH). The region spanning 503–660 (LLDFMLAAIR…NNESAEKHFT (158 aa)) is the Helicase C-terminal domain. The interval 751–784 (EEAASEQPEEKPDRRKRPSTPPSDDSADEDFLGF) is disordered. The span at 775–784 (DSADEDFLGF) shows a compositional bias: acidic residues.

The protein belongs to the SNF2/RAD54 helicase family. Interacts (via N-terminus) with spn-A/Rad51.

The protein localises to the nucleus. Involved in mitotic DNA repair and meiotic recombination. Functions in the recombinational DNA repair pathway. Essential for interhomolog gene conversion (GC), but may have a less important role in intersister GC than spn-A/Rad51. In the presence of DNA, spn-A/Rad51 enhances the ATPase activity of okr/Rad54. This Drosophila yakuba (Fruit fly) protein is DNA repair and recombination protein RAD54-like.